A 309-amino-acid chain; its full sequence is 2-dehydro-3-deoxygluconokinase (309 aa).

Residues 28–32 (GDTLN), tyrosine 88, 102–104 (YWR), and arginine 170 contribute to the substrate site. Residues 168-170 (NYR), 228-233 (KRGADS), and 261-264 (AAGD) contribute to the ATP site. Aspartate 264 provides a ligand contact to substrate. Aspartate 264 (proton acceptor) is an active-site residue.

It belongs to the carbohydrate kinase pfkB family.

The catalysed reaction is 2-dehydro-3-deoxy-D-gluconate + ATP = 2-dehydro-3-deoxy-6-phospho-D-gluconate + ADP + H(+). It functions in the pathway carbohydrate acid metabolism; 2-dehydro-3-deoxy-D-gluconate degradation; D-glyceraldehyde 3-phosphate and pyruvate from 2-dehydro-3-deoxy-D-gluconate: step 1/2. Its function is as follows. Catalyzes the phosphorylation of 2-keto-3-deoxygluconate (KDG) to produce 2-keto-3-deoxy-6-phosphogluconate (KDPG). This Escherichia coli (strain ATCC 9637 / CCM 2024 / DSM 1116 / LMG 11080 / NBRC 13500 / NCIMB 8666 / NRRL B-766 / W) protein is 2-dehydro-3-deoxygluconokinase (kdgK).